The following is a 188-amino-acid chain: dCTP deaminase (188 aa).

DCTP is bound by residues 111-116, 135-137, Gln156, Tyr170, and Gln180; these read KSTYAR and TLE. Catalysis depends on Glu137, which acts as the Proton donor/acceptor.

The protein belongs to the dCTP deaminase family. Homotrimer.

The enzyme catalyses dCTP + H2O + H(+) = dUTP + NH4(+). Its pathway is pyrimidine metabolism; dUMP biosynthesis; dUMP from dCTP (dUTP route): step 1/2. Functionally, catalyzes the deamination of dCTP to dUTP. The chain is dCTP deaminase from Acidithiobacillus ferrooxidans (strain ATCC 23270 / DSM 14882 / CIP 104768 / NCIMB 8455) (Ferrobacillus ferrooxidans (strain ATCC 23270)).